The following is a 143-amino-acid chain: Lysozyme C (143 aa).

A signal peptide spans 1 to 15; that stretch reads MRCLLLLLLVPVPGA. The C-type lysozyme domain maps to 16–143; that stretch reads KVFERCEWAR…LSSYVAGCGV (128 aa). Intrachain disulfides connect C21/C141, C45/C129, C79/C94, and C90/C108. Catalysis depends on residues E50 and D67.

The protein belongs to the glycosyl hydrolase 22 family. Monomer.

It is found in the secreted. It carries out the reaction Hydrolysis of (1-&gt;4)-beta-linkages between N-acetylmuramic acid and N-acetyl-D-glucosamine residues in a peptidoglycan and between N-acetyl-D-glucosamine residues in chitodextrins.. Its function is as follows. Lysozymes have primarily a bacteriolytic function; those in tissues and body fluids are associated with the monocyte-macrophage system and enhance the activity of immunoagents. In Scophthalmus maximus (Turbot), this protein is Lysozyme C (lys).